The chain runs to 161 residues: Anaerobic nitrite reductase Glb1-1 (161 aa).

Positions 8–157 constitute a Globin domain; it reads CFTEEQEALV…LVGAIKSEMK (150 aa). The Homodimerization signature appears at 41-45; the sequence is EIAPS. Heme b is bound by residues Ser-51, Lys-65, His-69, Lys-99, Thr-103, and His-104. The short motif at 111–123 is the Homodimerization element; sequence NEHFEVTKFALLD.

Belongs to the plant globin family. As to quaternary structure, homodimer. The cofactor is heme b. In terms of tissue distribution, mainly expressed in root nodules, and, to a lower extent, in leaves, roots, stems, flowers and fruits. Accumulates in mature root nodules.

The enzyme catalyses Fe(III)-heme b-[protein] + nitric oxide + H2O = Fe(II)-heme b-[protein] + nitrite + 2 H(+). Its function is as follows. Phytoglobin that reduces nitrite to nitric oxide (NO) under anoxic conditions (e.g. during flooding or in waterlogged soil) and upon root nodulation. Required for general plant development and during nodulation, especially for the onset of symbiosis. Monitors nitric oxide (NO) levels during early phase of the nitrogen-fixing symbiosis and buffers oxygen in functioning nodules. May not function as an oxygen storage or transport protein. Has an unusually high affinity for O(2) through a hexacoordinate heme iron because of a very low dissociation constant. The polypeptide is Anaerobic nitrite reductase Glb1-1 (Lotus japonicus (Lotus corniculatus var. japonicus)).